Here is a 338-residue protein sequence, read N- to C-terminus: DNA-directed RNA polymerase subunit alpha (338 aa).

The segment at 1 to 230 (MRKITTSAYM…QQMSVFKGIL (230 aa)) is alpha N-terminal domain (alpha-NTD). Residues 247-338 (FSKLLSSVED…ELKSQMSAKE (92 aa)) are alpha C-terminal domain (alpha-CTD).

This sequence belongs to the RNA polymerase alpha chain family. In terms of assembly, homodimer. The RNAP catalytic core consists of 2 alpha, 1 beta, 1 beta' and 1 omega subunit. When a sigma factor is associated with the core the holoenzyme is formed, which can initiate transcription.

The enzyme catalyses RNA(n) + a ribonucleoside 5'-triphosphate = RNA(n+1) + diphosphate. In terms of biological role, DNA-dependent RNA polymerase catalyzes the transcription of DNA into RNA using the four ribonucleoside triphosphates as substrates. The sequence is that of DNA-directed RNA polymerase subunit alpha from Campylobacter concisus (strain 13826).